A 323-amino-acid chain; its full sequence is MGSAMVLSMSLLGFLPYAVFGPAIGVLVDRHDRKKIMIGADLIIAAAGSVLTIVAFYMELPVWMVMIVLFIRSIGTAFHTPALNAVTPLLVPEEQLTKCAGYSQSLQSISYIVSPAVAALLYSVWELNAIIAIDVLGAVIASITVLIVRIPKLGDRVQSLDPNFIREMQEGMAVLRQNKGLFALLLVGTLYMFVYMPINALFPLISMDYFNGTPVHISITEISFASGMLIGGLLLGLFGNYQKRILLITASIFMMGISLTISGLLPQSGFFIFVVCSAIMGLSVPFYSGVQTALFQEKIKPEYLGRVFSLTGSIMSLAMPIGL.

9 consecutive transmembrane segments (helical) span residues 6 to 26, 51 to 71, 105 to 125, 128 to 148, 182 to 202, 219 to 239, 245 to 265, 270 to 290, and 303 to 323; these read VLSMSLLGFLPYAVFGPAIGV, LTIVAFYMELPVWMVMIVLFI, SLQSISYIVSPAVAALLYSVW, NAIIAIDVLGAVIASITVLIV, FALLLVGTLYMFVYMPINALF, ITEISFASGMLIGGLLLGLFG, ILLITASIFMMGISLTISGLL, FFIFVVCSAIMGLSVPFYSGV, and YLGRVFSLTGSIMSLAMPIGL.

The protein belongs to the major facilitator superfamily. Drug:H(+) antiporter-3 (DHA3) (TC 2.A.1.21) family.

The protein resides in the cell membrane. Its function is as follows. Confers resistance to 14-membered macrolides including erythromycin and to 15-membered macrolides but not to 16-membered macrolides, lincosamides or analogs of streptogramin B. May function as an efflux pump to regulate intracellular macrolide levels. The chain is Macrolide efflux protein A (mefA) from Enterococcus faecalis (Streptococcus faecalis).